The sequence spans 197 residues: MIARLAGKVAEKGADHVVLDVGGVGYLVHLSAVSLAGLPPQGGDGTLRIFTNVRQDAIELYGFASEDEEAVFRALIDVKGVGPRAAQNILSGIDARELAQAVAGSDVARLTKVPGIGKKTAERLVVELKEKLALLARAAGPARAKPGAGVVEQLRQALVNLGYKPPQADAAADALRDEAEGKKLDELLREALKRLRG.

The interval 1-64 is domain I; that stretch reads MIARLAGKVA…QDAIELYGFA (64 aa). Residues 65–141 form a domain II region; sequence SEDEEAVFRA…LALLARAAGP (77 aa). The flexible linker stretch occupies residues 141-145; sequence PARAK. The domain III stretch occupies residues 146–197; sequence PGAGVVEQLRQALVNLGYKPPQADAAADALRDEAEGKKLDELLREALKRLRG.

Belongs to the RuvA family. Homotetramer. Forms an RuvA(8)-RuvB(12)-Holliday junction (HJ) complex. HJ DNA is sandwiched between 2 RuvA tetramers; dsDNA enters through RuvA and exits via RuvB. An RuvB hexamer assembles on each DNA strand where it exits the tetramer. Each RuvB hexamer is contacted by two RuvA subunits (via domain III) on 2 adjacent RuvB subunits; this complex drives branch migration. In the full resolvosome a probable DNA-RuvA(4)-RuvB(12)-RuvC(2) complex forms which resolves the HJ.

It is found in the cytoplasm. Its function is as follows. The RuvA-RuvB-RuvC complex processes Holliday junction (HJ) DNA during genetic recombination and DNA repair, while the RuvA-RuvB complex plays an important role in the rescue of blocked DNA replication forks via replication fork reversal (RFR). RuvA specifically binds to HJ cruciform DNA, conferring on it an open structure. The RuvB hexamer acts as an ATP-dependent pump, pulling dsDNA into and through the RuvAB complex. HJ branch migration allows RuvC to scan DNA until it finds its consensus sequence, where it cleaves and resolves the cruciform DNA. This chain is Holliday junction branch migration complex subunit RuvA, found in Anaeromyxobacter sp. (strain Fw109-5).